A 380-amino-acid chain; its full sequence is Homoserine O-acetyltransferase (380 aa).

Positions 70 to 366 (NAVLVFHALT…SPHGHDAFLI (297 aa)) constitute an AB hydrolase-1 domain. Catalysis depends on serine 186, which acts as the Nucleophile. Residue arginine 250 coordinates substrate. Residues aspartate 333 and histidine 361 contribute to the active site. Substrate is bound at residue aspartate 362.

The protein belongs to the AB hydrolase superfamily. MetX family. Homodimer.

It is found in the cytoplasm. It carries out the reaction L-homoserine + acetyl-CoA = O-acetyl-L-homoserine + CoA. The protein operates within amino-acid biosynthesis; L-methionine biosynthesis via de novo pathway; O-acetyl-L-homoserine from L-homoserine: step 1/1. Functionally, transfers an acetyl group from acetyl-CoA to L-homoserine, forming acetyl-L-homoserine. This Thermus thermophilus (strain ATCC 27634 / DSM 579 / HB8) protein is Homoserine O-acetyltransferase.